A 239-amino-acid polypeptide reads, in one-letter code: Large ribosomal subunit protein uL3 (239 aa).

Disordered stretches follow at residues 140–166 (SHRS…PGHM) and 211–239 (PLPK…QEGA). Position 151 is an N5-methylglutamine (glutamine 151).

The protein belongs to the universal ribosomal protein uL3 family. Part of the 50S ribosomal subunit. Forms a cluster with proteins L14 and L19. Post-translationally, methylated by PrmB.

Functionally, one of the primary rRNA binding proteins, it binds directly near the 3'-end of the 23S rRNA, where it nucleates assembly of the 50S subunit. This is Large ribosomal subunit protein uL3 from Bradyrhizobium sp. (strain BTAi1 / ATCC BAA-1182).